We begin with the raw amino-acid sequence, 502 residues long: MPVKGLKVEAASIDPGHDAVILNPRDAEHLGVVAGLRASVVCRGRGVGAVVIVDPRVPERVAQLTKGLVERLGDCDTVDVHPIDVPPSFDAFKKRLSGARLSAAEYKMLIADIVAGYYDDAQIASFLVSQLYSKLADEELEHLIRAMVETGEVVKFGEPVYDVHSIGGVPGNSKVALLVVPIVASRGLLIPKTSSRAITSPAGTADTMEVLAKVAFKPQELHDMALRARGLIVWGGALNLAPADDIFVRVERRIGVDPPTQMVASILAKKLAMSVSRLVIDLPTGRGAKVQDESEAELLASMFLAQAGRLNIAMRVAITFGGEPIGFSVGPALEAREALQTLMKGDGASSLVEKACSLAGLVFELGGVVPRGRGYSLACEILRSGAAYRKFREIIEVQEGDPDIKPEDIKLAPKQFTLEAPRDGIVTMIDNRAISLAARAAGAPEDKGAGIQLHVKTGYRVRKGDPLLTIYASSDTRLHEAVRLLDEYNAVLIEGVVVKVLP.

Residues Gly-168, 195–200, and Thr-204 contribute to the AMP site; that span reads SRAITS. Residue Asp-257 is the Proton donor of the active site. Ser-265 and Lys-289 together coordinate AMP.

This sequence belongs to the thymidine/pyrimidine-nucleoside phosphorylase family. Type 2 subfamily.

The enzyme catalyses AMP + phosphate = alpha-D-ribose 1,5-bisphosphate + adenine. It carries out the reaction CMP + phosphate = cytosine + alpha-D-ribose 1,5-bisphosphate. It catalyses the reaction UMP + phosphate = alpha-D-ribose 1,5-bisphosphate + uracil. Functionally, catalyzes the conversion of AMP and phosphate to adenine and ribose 1,5-bisphosphate (R15P). Exhibits phosphorylase activity toward CMP and UMP in addition to AMP. Functions in an archaeal AMP degradation pathway, together with R15P isomerase and RubisCO. The chain is AMP phosphorylase from Hyperthermus butylicus (strain DSM 5456 / JCM 9403 / PLM1-5).